We begin with the raw amino-acid sequence, 129 residues long: Small ribosomal subunit protein uS11 (129 aa).

It belongs to the universal ribosomal protein uS11 family. As to quaternary structure, part of the 30S ribosomal subunit. Interacts with proteins S7 and S18. Binds to IF-3.

Located on the platform of the 30S subunit, it bridges several disparate RNA helices of the 16S rRNA. Forms part of the Shine-Dalgarno cleft in the 70S ribosome. This is Small ribosomal subunit protein uS11 from Listeria innocua serovar 6a (strain ATCC BAA-680 / CLIP 11262).